Reading from the N-terminus, the 502-residue chain is ATP synthase subunit alpha (502 aa).

A disordered region spans residues 115–135 (VDGLGPINTTNTRPIESPAPG). 169–176 (GDRQTGKT) lines the ATP pocket.

Belongs to the ATPase alpha/beta chains family. F-type ATPases have 2 components, CF(1) - the catalytic core - and CF(0) - the membrane proton channel. CF(1) has five subunits: alpha(3), beta(3), gamma(1), delta(1), epsilon(1). CF(0) has three main subunits: a(1), b(2) and c(9-12). The alpha and beta chains form an alternating ring which encloses part of the gamma chain. CF(1) is attached to CF(0) by a central stalk formed by the gamma and epsilon chains, while a peripheral stalk is formed by the delta and b chains.

Its subcellular location is the cell membrane. The catalysed reaction is ATP + H2O + 4 H(+)(in) = ADP + phosphate + 5 H(+)(out). Its function is as follows. Produces ATP from ADP in the presence of a proton gradient across the membrane. The alpha chain is a regulatory subunit. This is ATP synthase subunit alpha from Bacillus cereus (strain G9842).